The following is a 356-amino-acid chain: Acyl-coenzyme A diphosphatase NUDT19 (356 aa).

The Nudix hydrolase domain maps to 10–241 (AATVMLAAGW…IWLAPPQFYE (232 aa)). A disordered region spans residues 72-94 (PRFGLGPEPPRQPPFPGLSHGDA). Residues 78–87 (PEPPRQPPFP) are compositionally biased toward pro residues. Positions 97–118 (AALPDDVALRICAIRETFEEAG) match the Nudix box motif. E112 and E116 together coordinate Mg(2+). The residue at position 299 (K299) is an N6-succinyllysine. The Microbody targeting signal motif lies at 354–356 (ARL).

The protein belongs to the Nudix hydrolase family. As to quaternary structure, monomer. Requires Mg(2+) as cofactor. Mn(2+) serves as cofactor.

The protein localises to the peroxisome. The enzyme catalyses an acyl-CoA + H2O = an acyl-4'-phosphopantetheine + adenosine 3',5'-bisphosphate + 2 H(+). It catalyses the reaction CoA + H2O = (R)-4'-phosphopantetheine + adenosine 3',5'-bisphosphate + 2 H(+). The catalysed reaction is hexanoyl-CoA + H2O = hexanoyl-4'-phosphopantetheine + adenosine 3',5'-bisphosphate + 2 H(+). It carries out the reaction octanoyl-CoA + H2O = S-octanoyl-4'-phosphopantetheine + adenosine 3',5'-bisphosphate + 2 H(+). The enzyme catalyses butanoyl-CoA + H2O = S-butanoyl-4'-phosphopantetheine + adenosine 3',5'-bisphosphate + 2 H(+). It catalyses the reaction propanoyl-CoA + H2O = propanoyl-4'-phosphopantetheine + adenosine 3',5'-bisphosphate + 2 H(+). The catalysed reaction is malonyl-CoA + H2O = malonyl-4'-phosphopantetheine + adenosine 3',5'-bisphosphate + 2 H(+). It carries out the reaction succinyl-CoA + H2O = succinyl-4'-phosphopantetheine + adenosine 3',5'-bisphosphate + 2 H(+). The enzyme catalyses choloyl-CoA + H2O = S-choloyl-4'-phosphopantetheine + adenosine 3',5'-bisphosphate + 2 H(+). It catalyses the reaction 4,8-dimethylnonanoyl-CoA + H2O = S-(4,8-dimethylnonanoyl)-4'-phosphopantetheine + adenosine 3',5'-bisphosphate + 2 H(+). The catalysed reaction is (9Z,12Z,15Z)-octadecatrienoyl-CoA + H2O = S-(9Z,12Z,15Z-octadecatrienoyl)-4'-phosphopantetheine + adenosine 3',5'-bisphosphate + 2 H(+). It carries out the reaction (9Z,12Z)-octadecadienoyl-CoA + H2O = S-(9Z,12Z-octadecadienoyl)-4'-phosphopantetheine + adenosine 3',5'-bisphosphate + 2 H(+). The enzyme catalyses (9Z)-hexadecenoyl-CoA + H2O = S-(9Z-hexadecenoyl)-4'-phosphopantetheine + adenosine 3',5'-bisphosphate + 2 H(+). It catalyses the reaction (9Z)-tetradecenoyl-CoA + H2O = S-(9Z-tetradecenoyl)-4'-phosphopantetheine + adenosine 3',5'-bisphosphate + 2 H(+). The catalysed reaction is (6Z)-octenoyl-CoA + H2O = S-(6Z-octenoyl)-4'-phosphopantetheine + adenosine 3',5'-bisphosphate + 2 H(+). It carries out the reaction hexadecanoyl-CoA + H2O = S-hexadecanoyl-4'-phosphopantetheine + adenosine 3',5'-bisphosphate + 2 H(+). The enzyme catalyses tetradecanoyl-CoA + H2O = tetradecanoyl-4'-phosphopantetheine + adenosine 3',5'-bisphosphate + 2 H(+). It catalyses the reaction dodecanoyl-CoA + H2O = S-dodecanoyl-4'-phosphopantetheine + adenosine 3',5'-bisphosphate + 2 H(+). The catalysed reaction is a 5'-end CoA-ribonucleoside in mRNA + H2O = a 5'-end phospho-adenosine-phospho-ribonucleoside in mRNA + (R)-4'-phosphopantetheine + 2 H(+). Its function is as follows. Fatty acyl-coenzyme A (CoA) diphosphatase that hydrolyzes fatty acyl-CoA to yield acyl-4'-phosphopantetheine and adenosine 3',5'-bisphosphate. Mediates the hydrolysis of a wide range of CoA esters, including choloyl-CoA and branched-chain fatty-acyl-CoA esters and at low substrate concentrations medium and long-chain fatty-acyl-CoA esters are the primary substrates. Highest activity seen with medium-chain acyl-CoA esters and higher rates of activity seen with the unsaturated acyl-CoA esters compared with the saturated esters. Exhibits decapping activity towards dpCoA-capped RNAs in vitro. The chain is Acyl-coenzyme A diphosphatase NUDT19 (Nudt19) from Mus saxicola (Brown spiny mouse).